A 493-amino-acid chain; its full sequence is Amphoterin-induced protein 1 (493 aa).

Residues 1-27 form the signal peptide; it reads MHPHRDPRGLWLLLPSLSLLLFEVARA. Residues 28 to 61 form the LRRNT domain; sequence GRAVVSCPAACLCASNILSCSKQQLPNVPHSLPS. At 28–372 the chain is on the extracellular side; that stretch reads GRAVVSCPAA…LHGHHDTLNT (345 aa). 2 cysteine pairs are disulfide-bonded: cysteine 34-cysteine 40 and cysteine 38-cysteine 47. LRR repeat units lie at residues 62–83, 87–108, 111–132, 135–156, 159–179, and 186–206; these read YTAL…WTPT, QLHS…AFSP, NLRY…LFSD, VLEV…AFDD, QLQK…ELVK, and KLTL…PDLQ. Asparagine 72 carries N-linked (GlcNAc...) asparagine glycosylation. In terms of domain architecture, LRRCT spans 221–272; that stretch reads NPLNCDCELYQLFSHWQYRQLSSVMDFQEDLYCMNSKKLHNVFNLSFLNCGE. Cystine bridges form between cysteine 225–cysteine 253, cysteine 227–cysteine 270, and cysteine 290–cysteine 341. 4 N-linked (GlcNAc...) asparagine glycosylation sites follow: asparagine 264, asparagine 315, asparagine 349, and asparagine 360. An Ig-like C2-type domain is found at 269 to 353; sequence NCGEYKERAW…MGETFNETLS (85 aa). Residues 373 to 393 form a helical membrane-spanning segment; the sequence is AYTTLVGCILSVVLVLIYLYL. The Cytoplasmic segment spans residues 394–493; that stretch reads TPCRCWCRGV…SVFSDTPIVV (100 aa). Positions 405 to 493 are disordered; that stretch reads KPSSHQGDSL…SVFSDTPIVV (89 aa). A compositionally biased stretch (polar residues) spans 408–424; the sequence is SHQGDSLSSSMLSTTPN. The segment covering 431-442 has biased composition (basic and acidic residues); it reads GDKDDGFDRRVA. 2 positions are modified to phosphoserine: serine 477 and serine 481.

Belongs to the immunoglobulin superfamily. AMIGO family. In terms of assembly, homodimer, and heterodimer with AMIGO2 and AMIGO3. Interacts with KCNB1.

The protein localises to the cell membrane. It is found in the perikaryon. Its subcellular location is the cell projection. The protein resides in the dendrite. It localises to the axon. In terms of biological role, promotes growth and fasciculation of neurites from cultured hippocampal neurons. May be involved in fasciculation as well as myelination of developing neural axons. May have a role in regeneration as well as neural plasticity in the adult nervous system. May mediate homophilic as well as heterophilic cell-cell interaction and contribute to signal transduction through its intracellular domain. Assembled with KCNB1 modulates the gating characteristics of the delayed rectifier voltage-dependent potassium channel KCNB1. The protein is Amphoterin-induced protein 1 of Homo sapiens (Human).